The primary structure comprises 471 residues: Argininosuccinate lyase (471 aa).

It belongs to the lyase 1 family. Argininosuccinate lyase subfamily.

The protein localises to the cytoplasm. It carries out the reaction 2-(N(omega)-L-arginino)succinate = fumarate + L-arginine. Its pathway is amino-acid biosynthesis; L-arginine biosynthesis; L-arginine from L-ornithine and carbamoyl phosphate: step 3/3. The polypeptide is Argininosuccinate lyase (Ralstonia pickettii (strain 12J)).